Here is a 292-residue protein sequence, read N- to C-terminus: RNA 5'-monophosphate methyltransferase (292 aa).

A disordered region spans residues 1–21 (MAVPTELDGGSVKETAAEEES). Residues R46, N76, D110, 135-136 (DF), and M164 each bind S-adenosyl-L-methionine. The Bin3-type SAM domain maps to 53–274 (ELLRQLFPES…KQTIETHPIP (222 aa)).

It belongs to the methyltransferase superfamily. Interacts with DICER1; the interaction may be mediated by RNA.

Its subcellular location is the cytoplasm. The catalysed reaction is a 5'-end 5'-phospho-ribonucleoside-RNA + S-adenosyl-L-methionine = a 5'-end (5'-methylphospho)-ribonucleoside-RNA + S-adenosyl-L-homocysteine. The enzyme catalyses a 5'-end 5'-phospho-ribonucleoside-RNA + 2 S-adenosyl-L-methionine = a 5'-end (5'-bismethylphospho)-ribonucleoside-RNA + 2 S-adenosyl-L-homocysteine. In terms of biological role, O-methyltransferase that specifically monomethylates 5'-monophosphate of cytoplasmic histidyl tRNA (tRNA(His)), acting as a capping enzyme by protecting tRNA(His) from cleavage by DICER1. Also able, with less efficiently, to methylate the 5' monophosphate of a subset of pre-miRNAs, acting as a negative regulator of miRNA processing. The 5' monophosphate of pre-miRNAs is recognized by DICER1 and is required for pre-miRNAs processing: methylation at this position reduces the processing of pre-miRNAs by DICER1. Was also reported to mediate dimethylation of pre-miR-145; however dimethylation cannot be reproduced by another group which observes a monomethylation of pre-miR-145. This Homo sapiens (Human) protein is RNA 5'-monophosphate methyltransferase.